The following is a 338-amino-acid chain: Fructose-1,6-bisphosphatase 1 (338 aa).

Thr-2 is subject to N-acetylthreonine. AMP is bound by residues 18–22 (VMEEG) and 28–32 (TGEMT). 2 residues coordinate Mg(2+): Asp-69 and Glu-98. An AMP-binding site is contributed by 113 to 114 (KY). 3 residues coordinate Mg(2+): Asp-119, Leu-121, and Asp-122. Substrate is bound at residue 122–125 (DGSS). Lys-141 is an AMP binding site. Residue Lys-151 is modified to N6-succinyllysine. Ser-208 bears the Phosphoserine mark. Residues 213-216 (NEGY), 244-249 (RYVGSM), Tyr-265, and 275-277 (KLR) contribute to the substrate site. 3 positions are modified to phosphotyrosine: Tyr-216, Tyr-245, and Tyr-265. Residue Glu-281 coordinates Mg(2+).

The protein belongs to the FBPase class 1 family. As to quaternary structure, homotetramer. Mg(2+) is required as a cofactor.

It catalyses the reaction beta-D-fructose 1,6-bisphosphate + H2O = beta-D-fructose 6-phosphate + phosphate. Its pathway is carbohydrate biosynthesis; gluconeogenesis. Its activity is regulated as follows. Subject to complex allosteric regulation. The enzyme can assume an active R-state, or an inactive T-state. Intermediate conformations may exist. AMP acts as an allosteric inhibitor. AMP binding affects the turnover of bound substrate and not the affinity for substrate. Fructose 2,6-bisphosphate acts as a competitive inhibitor. Fructose 2,6-bisphosphate and AMP have synergistic effects. Its function is as follows. Catalyzes the hydrolysis of fructose 1,6-bisphosphate to fructose 6-phosphate in the presence of divalent cations, acting as a rate-limiting enzyme in gluconeogenesis. Plays a role in regulating glucose sensing and insulin secretion of pancreatic beta-cells. Appears to modulate glycerol gluconeogenesis in liver. Important regulator of appetite and adiposity; increased expression of the protein in liver after nutrient excess increases circulating satiety hormones and reduces appetite-stimulating neuropeptides and thus seems to provide a feedback mechanism to limit weight gain. In Bos taurus (Bovine), this protein is Fructose-1,6-bisphosphatase 1 (FBP1).